Consider the following 377-residue polypeptide: MAGTDREKALDAALAQIERQFGKGAVMRLGERPNEPIEVIPTGSTALDVALGVGGLPRGRVVEVYGPESSGKTTLTLHAVANAQKAGGQVAFVDAEHALDPEYAKKLGVDIDNLILSQPDNGEQALEIVDMLVRSGALDLIVIDSVAALVPRAEIEGEMGDSHVGLQARLMSQALRKITSALNQSKTTAIFINQLREKIGVMFGSPETTTGGRALKFYASVRLDIRRIETLKDGTDAVGNRTRVKVVKNKVAPPFKQAEFDILYGQGISREGGLIDMGVENGFVRKAGAWYTYEGDQLGQGKENARNFLKDNPDLANEIEKKIKEKLGVGVRPEEPTAEPGADAAVTSAAAATDDTAKTVSAPAAKTTKSKAAAAKS.

Glycine 66–threonine 73 contacts ATP. Positions valine 329–serine 377 are disordered. Positions alanine 342 to serine 377 are enriched in low complexity.

It belongs to the RecA family.

The protein localises to the cytoplasm. Its function is as follows. Can catalyze the hydrolysis of ATP in the presence of single-stranded DNA, the ATP-dependent uptake of single-stranded DNA by duplex DNA, and the ATP-dependent hybridization of homologous single-stranded DNAs. It interacts with LexA causing its activation and leading to its autocatalytic cleavage. This Streptomyces avermitilis (strain ATCC 31267 / DSM 46492 / JCM 5070 / NBRC 14893 / NCIMB 12804 / NRRL 8165 / MA-4680) protein is Protein RecA.